Here is a 957-residue protein sequence, read N- to C-terminus: Glycine dehydrogenase (decarboxylating) (957 aa).

Lys708 bears the N6-(pyridoxal phosphate)lysine mark.

It belongs to the GcvP family. In terms of assembly, the glycine cleavage system is composed of four proteins: P, T, L and H. Pyridoxal 5'-phosphate serves as cofactor.

It catalyses the reaction N(6)-[(R)-lipoyl]-L-lysyl-[glycine-cleavage complex H protein] + glycine + H(+) = N(6)-[(R)-S(8)-aminomethyldihydrolipoyl]-L-lysyl-[glycine-cleavage complex H protein] + CO2. The glycine cleavage system catalyzes the degradation of glycine. The P protein binds the alpha-amino group of glycine through its pyridoxal phosphate cofactor; CO(2) is released and the remaining methylamine moiety is then transferred to the lipoamide cofactor of the H protein. The sequence is that of Glycine dehydrogenase (decarboxylating) from Salmonella typhimurium (strain LT2 / SGSC1412 / ATCC 700720).